Here is a 206-residue protein sequence, read N- to C-terminus: MAKATFFYFLFIGYVWPIDSVMFNLAPNTQKCLKEDIQANQLVMGEYEVSDVPGQIIDYVARDTKGHILSQKEHITKGKFSFMSEVYDAYEICFISKVPPHQRGIPQEVSLVTKKGVETKSYEGIGEASKLKPLEVDLKRLEDLSDSIVRDFILMRKREEEMRDTNEKTNSRVLFFSIFSMCCLLGLATWQVLYLRRYFKAKKLIE.

The N-terminal stretch at 1 to 17 (MAKATFFYFLFIGYVWP) is a signal peptide. The Lumenal portion of the chain corresponds to 18–172 (IDSVMFNLAP…RDTNEKTNSR (155 aa)). A GOLD domain is found at 30 to 140 (QKCLKEDIQA…LKPLEVDLKR (111 aa)). A helical membrane pass occupies residues 173 to 193 (VLFFSIFSMCCLLGLATWQVL). Residues 194–206 (YLRRYFKAKKLIE) are Cytoplasmic-facing.

Belongs to the EMP24/GP25L family.

The protein resides in the membrane. In terms of biological role, eca and bai are essential, though not redundant, for dorsoventral patterning of the embryo. Specifically required during early embryogenesis for the activity of maternal tkv, while the zygotic tkv is not affected. The protein is Transmembrane emp24 domain-containing protein bai of Drosophila persimilis (Fruit fly).